The primary structure comprises 264 residues: NADH dehydrogenase [ubiquinone] iron-sulfur protein 3, mitochondrial (264 aa).

The transit peptide at Met-1–Arg-36 directs the protein to the mitochondrion.

The protein belongs to the complex I 30 kDa subunit family. As to quaternary structure, core subunit of respiratory chain NADH dehydrogenase (Complex I) which is composed of 45 different subunits. Interacts with NDUFAF3. Interacts with RAB5IF. Found in subcomplexes containing subunits NDUFS2, MT-ND1 and NDUFA13.

Its subcellular location is the mitochondrion inner membrane. It catalyses the reaction a ubiquinone + NADH + 5 H(+)(in) = a ubiquinol + NAD(+) + 4 H(+)(out). In terms of biological role, core subunit of the mitochondrial membrane respiratory chain NADH dehydrogenase (Complex I) which catalyzes electron transfer from NADH through the respiratory chain, using ubiquinone as an electron acceptor. Essential for the catalytic activity and assembly of complex I. This is NADH dehydrogenase [ubiquinone] iron-sulfur protein 3, mitochondrial (NDUFS3) from Homo sapiens (Human).